Reading from the N-terminus, the 493-residue chain is Putative BTB/POZ domain-containing protein L35 (493 aa).

Residues 16–87 (TDLKLTLVDD…YLVDNKSEVD (72 aa)) enclose the BTB domain.

Belongs to the mimivirus BTB/WD family.

This chain is Putative BTB/POZ domain-containing protein L35, found in Acanthamoeba polyphaga (Amoeba).